The primary structure comprises 244 residues: uncharacterized protein (244 aa).

Over residues Met1–Ser11 the composition is skewed to basic residues. Disordered regions lie at residues Met1 to Glu104 and Ala213 to Lys244. A compositionally biased stretch (basic and acidic residues) spans Pro12 to Arg31. Over residues Lys32–Ser46 the composition is skewed to basic residues. Residues Phe63 to Ser75 are compositionally biased toward basic and acidic residues. The segment covering Lys77–Pro89 has biased composition (pro residues). Over residues Ala213–Glu223 the composition is skewed to basic and acidic residues. Polar residues predominate over residues Gln224–Ser234.

This is an uncharacterized protein from Caenorhabditis elegans.